The sequence spans 897 residues: Pre-mRNA-splicing factor CWC22 homolog (897 aa).

Over residues 1–10 (MSSSRSQSPE) the composition is skewed to polar residues. Positions 1-155 (MSSSRSQSPE…EKKKKEPLDI (155 aa)) are disordered. Composition is skewed to basic and acidic residues over residues 36–54 (SSEKSASRSQSPRESREVS), 93–107 (RSKETRESESPEKSP), and 131–155 (RSSERKQSEEPAPLPEKKKKEPLDI). An MIF4G domain is found at 194–382 (KKKIHGLVNR…ETAMQIRKDK (189 aa)). The tract at residues 444 to 472 (NADISDEDGGDELDDEEEGSDVEEAPKKT) is disordered. Positions 447–466 (ISDEDGGDELDDEEEGSDVE) are enriched in acidic residues. Residues 485–601 (AFRREVYLTM…DWKILADMKM (117 aa)) enclose the MI domain. Low complexity-rich tracts occupy residues 689 to 710 (LDQLKAESSSDSSSSSDSSDSS) and 720 to 730 (DSSSDSSSSSE). Positions 689–897 (LDQLKAESSS…VESDDRRRRR (209 aa)) are disordered. Residues 743-897 (NSEESSKKKE…VESDDRRRRR (155 aa)) show a composition bias toward basic and acidic residues.

Belongs to the CWC22 family. In terms of tissue distribution, expressed in germ cells, oocytes, and sperm cells.

The protein localises to the nucleus. It localises to the nucleus speckle. In terms of biological role, required for pre-mRNA splicing and for exon-junction complex (EJC) assembly. Hinders EIF4A3 from non-specifically binding RNA and escorts it to the splicing machinery to promote EJC assembly on mature mRNAs. Through its role in EJC assembly, required for nonsense-mediated mRNA decay. Plays a role in the nuclear retention of unspliced mRNAs. Plays a role in sex determination. Required for early embryogenesis and tissue differentiation. This Caenorhabditis elegans protein is Pre-mRNA-splicing factor CWC22 homolog.